Consider the following 204-residue polypeptide: Holliday junction branch migration complex subunit RuvA (204 aa).

The segment at 1 to 64 (MIGRLRGILL…EDAQLLYGFN (64 aa)) is domain I. A domain II region spans residues 65 to 143 (TVKERALFRE…GWGAGDLFTP (79 aa)). The tract at residues 144–155 (FTDAAPTDSAAA) is flexible linker. Residues 156 to 204 (SSNSAEEEAVSALLALGYKPTQASKVVSQIAKPDMSSEQLIREALKSMV) are domain III.

Belongs to the RuvA family. Homotetramer. Forms an RuvA(8)-RuvB(12)-Holliday junction (HJ) complex. HJ DNA is sandwiched between 2 RuvA tetramers; dsDNA enters through RuvA and exits via RuvB. An RuvB hexamer assembles on each DNA strand where it exits the tetramer. Each RuvB hexamer is contacted by two RuvA subunits (via domain III) on 2 adjacent RuvB subunits; this complex drives branch migration. In the full resolvosome a probable DNA-RuvA(4)-RuvB(12)-RuvC(2) complex forms which resolves the HJ.

The protein resides in the cytoplasm. In terms of biological role, the RuvA-RuvB-RuvC complex processes Holliday junction (HJ) DNA during genetic recombination and DNA repair, while the RuvA-RuvB complex plays an important role in the rescue of blocked DNA replication forks via replication fork reversal (RFR). RuvA specifically binds to HJ cruciform DNA, conferring on it an open structure. The RuvB hexamer acts as an ATP-dependent pump, pulling dsDNA into and through the RuvAB complex. HJ branch migration allows RuvC to scan DNA until it finds its consensus sequence, where it cleaves and resolves the cruciform DNA. The protein is Holliday junction branch migration complex subunit RuvA of Vibrio parahaemolyticus serotype O3:K6 (strain RIMD 2210633).